Reading from the N-terminus, the 180-residue chain is ATP synthase subunit delta (180 aa).

It belongs to the ATPase delta chain family. F-type ATPases have 2 components, F(1) - the catalytic core - and F(0) - the membrane proton channel. F(1) has five subunits: alpha(3), beta(3), gamma(1), delta(1), epsilon(1). F(0) has three main subunits: a(1), b(2) and c(10-14). The alpha and beta chains form an alternating ring which encloses part of the gamma chain. F(1) is attached to F(0) by a central stalk formed by the gamma and epsilon chains, while a peripheral stalk is formed by the delta and b chains.

The protein resides in the cell membrane. F(1)F(0) ATP synthase produces ATP from ADP in the presence of a proton or sodium gradient. F-type ATPases consist of two structural domains, F(1) containing the extramembraneous catalytic core and F(0) containing the membrane proton channel, linked together by a central stalk and a peripheral stalk. During catalysis, ATP synthesis in the catalytic domain of F(1) is coupled via a rotary mechanism of the central stalk subunits to proton translocation. Functionally, this protein is part of the stalk that links CF(0) to CF(1). It either transmits conformational changes from CF(0) to CF(1) or is implicated in proton conduction. This chain is ATP synthase subunit delta, found in Dehalococcoides mccartyi (strain ATCC BAA-2266 / KCTC 15142 / 195) (Dehalococcoides ethenogenes (strain 195)).